Reading from the N-terminus, the 327-residue chain is GMP reductase (327 aa).

Cys-176 functions as the Thioimidate intermediate in the catalytic mechanism. Ile-205–Val-228 contributes to the NADP(+) binding site.

It belongs to the IMPDH/GMPR family. GuaC type 2 subfamily.

The enzyme catalyses IMP + NH4(+) + NADP(+) = GMP + NADPH + 2 H(+). Functionally, catalyzes the irreversible NADPH-dependent deamination of GMP to IMP. It functions in the conversion of nucleobase, nucleoside and nucleotide derivatives of G to A nucleotides, and in maintaining the intracellular balance of A and G nucleotides. The polypeptide is GMP reductase (Streptococcus gordonii (strain Challis / ATCC 35105 / BCRC 15272 / CH1 / DL1 / V288)).